A 155-amino-acid chain; its full sequence is Small ribosomal subunit protein uS7 (155 aa).

The protein belongs to the universal ribosomal protein uS7 family. In terms of assembly, part of the 30S ribosomal subunit. Contacts proteins S9 and S11.

One of the primary rRNA binding proteins, it binds directly to 16S rRNA where it nucleates assembly of the head domain of the 30S subunit. Is located at the subunit interface close to the decoding center, probably blocks exit of the E-site tRNA. The protein is Small ribosomal subunit protein uS7 of Thermosipho melanesiensis (strain DSM 12029 / CIP 104789 / BI429).